A 326-amino-acid polypeptide reads, in one-letter code: MIDPLASPGSAPLIVIAGPTASGKSALALRVARRFNGVVINADSMQVYRDLRILSARPSVEDEAAAPHALYGVLDGAEVCSVGRWLALADGAVAAARAAGRLPILCGGTGLYLKAALEGLASVPEVAPEVRAEARELLAALGPAALHAKLAELDRAMAERLRPSDAQRIARAYEVVRGTGRSLMDWWSDPVATPALPGRPLLLVIDPPRAAQRAACDARLLAMVAAGALDELALLLARRLDPALPVMRAVGVPELARTLRGEVGLAEAVERAQGATRRYAKRQGTWIRTQLRPDRVLSESLVTQLSESQLTDIDNFLYAFLLTGAS.

18-25 (GPTASGKS) contacts ATP. 20-25 (TASGKS) contributes to the substrate binding site. Interaction with substrate tRNA regions lie at residues 43–46 (DSMQ) and 167–171 (QRIAR).

It belongs to the IPP transferase family. In terms of assembly, monomer. The cofactor is Mg(2+).

The catalysed reaction is adenosine(37) in tRNA + dimethylallyl diphosphate = N(6)-dimethylallyladenosine(37) in tRNA + diphosphate. Catalyzes the transfer of a dimethylallyl group onto the adenine at position 37 in tRNAs that read codons beginning with uridine, leading to the formation of N6-(dimethylallyl)adenosine (i(6)A). The protein is tRNA dimethylallyltransferase of Rhodospirillum rubrum (strain ATCC 11170 / ATH 1.1.1 / DSM 467 / LMG 4362 / NCIMB 8255 / S1).